The following is a 175-amino-acid chain: O-acetyl-ADP-ribose deacetylase (175 aa).

The region spanning 1–175 (MAVQPEVILG…IYRRLLASYP (175 aa)) is the Macro domain. Residues 11–12 (DI), Asn25, 33–35 (GVD), and 122–126 (STGVY) contribute to the substrate site. Residue Asp35 is the Proton acceptor of the active site.

The protein belongs to the MacroD-type family. YmdB subfamily. In terms of assembly, homodimer. Interacts with RNase III.

The enzyme catalyses 3''-O-acetyl-ADP-D-ribose + H2O = ADP-D-ribose + acetate + H(+). It carries out the reaction 2''-O-acetyl-ADP-D-ribose + H2O = ADP-D-ribose + acetate + H(+). In terms of biological role, deacetylates O-acetyl-ADP ribose to yield ADP-ribose and free acetate. Down-regulates ribonuclease 3 (RNase III) activity. Acts by interacting directly with the region of the ribonuclease that is required for dimerization/activation. In Klebsiella pneumoniae (strain 342), this protein is O-acetyl-ADP-ribose deacetylase.